Reading from the N-terminus, the 156-residue chain is MNITVLAVGTKMPRWVDEAVAEYAKRFGRDVAYALKEIKPEKRGAGVNAAQGMAAEEKRILEAIPQGAFLVVLDERGKAPTSVELAEHLKTWQQNGEHVCFVIGGADGMTDRLKQQARIMMRLSSLTLPHGMVRVLLTEQLYRAASILHNHPYHRE.

S-adenosyl-L-methionine-binding positions include Leu73, Gly104, and 123–128 (LSSLTL).

The protein belongs to the RNA methyltransferase RlmH family. As to quaternary structure, homodimer.

It localises to the cytoplasm. The enzyme catalyses pseudouridine(1915) in 23S rRNA + S-adenosyl-L-methionine = N(3)-methylpseudouridine(1915) in 23S rRNA + S-adenosyl-L-homocysteine + H(+). Specifically methylates the pseudouridine at position 1915 (m3Psi1915) in 23S rRNA. This Neisseria meningitidis serogroup C (strain 053442) protein is Ribosomal RNA large subunit methyltransferase H.